The following is a 249-amino-acid chain: ATP synthase subunit a (249 aa).

Helical transmembrane passes span 26-46, 84-104, 114-134, 143-163, 185-205, and 208-228; these read FTNVSAFMVATVVLASGFLYL, FFPFVFSLFMFVLVANFIGLF, IIVTFALSLLVIGTVIFYGFF, LFVPSGVPGIIVPLVVLIEII, ITLKVFAGFVVSLSSLGALGI, and AVLPLLMTVAITALEFLVAFL.

This sequence belongs to the ATPase A chain family. F-type ATPases have 2 components, CF(1) - the catalytic core - and CF(0) - the membrane proton channel. CF(1) has five subunits: alpha(3), beta(3), gamma(1), delta(1), epsilon(1). CF(0) has three main subunits: a(1), b(2) and c(9-12). The alpha and beta chains form an alternating ring which encloses part of the gamma chain. CF(1) is attached to CF(0) by a central stalk formed by the gamma and epsilon chains, while a peripheral stalk is formed by the delta and b chains.

It is found in the cell inner membrane. In terms of biological role, key component of the proton channel; it plays a direct role in the translocation of protons across the membrane. This chain is ATP synthase subunit a, found in Brucella canis (strain ATCC 23365 / NCTC 10854 / RM-666).